A 23-amino-acid polypeptide reads, in one-letter code: Conotoxin Cl6c (23 aa).

3 cysteine pairs are disulfide-bonded: C2/C12, C5/C17, and C11/C21.

Expressed by the venom duct.

The protein localises to the secreted. The protein is Conotoxin Cl6c of Californiconus californicus (California cone).